The chain runs to 80 residues: Acyl carrier protein (80 aa).

Residues 2-77 (SDTLKRLQKI…DALNYIENKI (76 aa)) enclose the Carrier domain. At serine 37 the chain carries O-(pantetheine 4'-phosphoryl)serine.

Belongs to the acyl carrier protein (ACP) family. In terms of processing, 4'-phosphopantetheine is transferred from CoA to a specific serine of apo-ACP by AcpS. This modification is essential for activity because fatty acids are bound in thioester linkage to the sulfhydryl of the prosthetic group.

The protein localises to the plastid. It is found in the chloroplast. It functions in the pathway lipid metabolism; fatty acid biosynthesis. Functionally, carrier of the growing fatty acid chain in fatty acid biosynthesis. The protein is Acyl carrier protein of Cylindrotheca sp. (strain N1) (Marine diatom).